The following is an 887-amino-acid chain: Exocyst complex component SEC3A (887 aa).

Coiled coils occupy residues 221-248 (IGEA…AILE) and 281-301 (LRHM…LEMQ). The tract at residues 542-581 (GAGNDKKSQSNNDDGNDDDDLGIMDIDETDKKPGKNSPDL) is disordered. Residues 555–569 (DGNDDDDLGIMDIDE) show a composition bias toward acidic residues.

The protein belongs to the SEC3 family. In terms of assembly, the exocyst complex is composed of SEC3, SEC5, SEC6, SEC8, SEC10, EXO70A1 and EXO84B. Interacts with EXO70A1, SEC5A and ICR1, but not with ICR2. Binds to EXO70H1. Binds directly to B1L. Widely expressed. Preferentially expressed in tissues containing dividing and expanding cells, such as the shoot apical meristem, root tip, lateral root primordia and developing embryos.

It localises to the cytoplasm. It is found in the cytosol. The protein localises to the cell membrane. Its subcellular location is the cytoskeleton. The protein resides in the phragmoplast. It localises to the secreted. It is found in the extracellular exosome. Component of the exocyst complex involved in the docking of exocytic vesicles with fusion sites on the plasma membrane during regulated or polarized secretion. Involved in polarized cell growth and organ morphogenesis. During cytokinesis, involved in cell plate initiation, cell plate maturation and formation of new primary cell wall. During cytokinesis, involved in cell plate initiation, cell plate maturation and formation of new primary cell wall. The protein is Exocyst complex component SEC3A of Arabidopsis thaliana (Mouse-ear cress).